We begin with the raw amino-acid sequence, 410 residues long: Cysteine desulfurase IscS (410 aa).

Residues 80-81 (AT), asparagine 160, glutamine 188, and 208-210 (SGH) each bind pyridoxal 5'-phosphate. Residue lysine 211 is modified to N6-(pyridoxal phosphate)lysine. Position 248 (threonine 248) interacts with pyridoxal 5'-phosphate. Cysteine 334 functions as the Cysteine persulfide intermediate in the catalytic mechanism. Cysteine 334 is a [2Fe-2S] cluster binding site.

It belongs to the class-V pyridoxal-phosphate-dependent aminotransferase family. NifS/IscS subfamily. In terms of assembly, homodimer. Forms a heterotetramer with IscU, interacts with other sulfur acceptors. Pyridoxal 5'-phosphate serves as cofactor.

Its subcellular location is the cytoplasm. It catalyses the reaction (sulfur carrier)-H + L-cysteine = (sulfur carrier)-SH + L-alanine. It functions in the pathway cofactor biosynthesis; iron-sulfur cluster biosynthesis. Master enzyme that delivers sulfur to a number of partners involved in Fe-S cluster assembly, tRNA modification or cofactor biosynthesis. Catalyzes the removal of elemental sulfur atoms from cysteine to produce alanine. Functions as a sulfur delivery protein for Fe-S cluster synthesis onto IscU, an Fe-S scaffold assembly protein, as well as other S acceptor proteins. The polypeptide is Cysteine desulfurase IscS (Rickettsia felis (strain ATCC VR-1525 / URRWXCal2) (Rickettsia azadi)).